A 350-amino-acid chain; its full sequence is GDSL esterase/lipase At2g42990 (350 aa).

The N-terminal stretch at 1–24 (MATHYLSPSILCIILTTLVSIAGA) is a signal peptide. Ser35 acts as the Nucleophile in catalysis. Asn98, Asn117, and Asn141 each carry an N-linked (GlcNAc...) asparagine glycan. Catalysis depends on residues Asp325 and His328.

This sequence belongs to the 'GDSL' lipolytic enzyme family.

It is found in the secreted. This chain is GDSL esterase/lipase At2g42990, found in Arabidopsis thaliana (Mouse-ear cress).